The chain runs to 294 residues: Elongation factor Ts (294 aa).

The interval 82–85 (TDFV) is involved in Mg(2+) ion dislocation from EF-Tu.

This sequence belongs to the EF-Ts family.

It is found in the cytoplasm. Its function is as follows. Associates with the EF-Tu.GDP complex and induces the exchange of GDP to GTP. It remains bound to the aminoacyl-tRNA.EF-Tu.GTP complex up to the GTP hydrolysis stage on the ribosome. The chain is Elongation factor Ts from Psychrobacter cryohalolentis (strain ATCC BAA-1226 / DSM 17306 / VKM B-2378 / K5).